Reading from the N-terminus, the 454-residue chain is tRNA modification GTPase MnmE (454 aa).

(6S)-5-formyl-5,6,7,8-tetrahydrofolate contacts are provided by Arg23, Glu80, and Lys120. The region spanning 216 to 377 is the TrmE-type G domain; sequence GMKVVIAGRP…LRNHLKQSMG (162 aa). Residue Asn226 coordinates K(+). GTP is bound by residues 226–231, 245–251, 270–273, 335–338, and 358–360; these read NAGKSS, TDIAGTT, DTAG, NKAD, and SAR. Ser230 lines the Mg(2+) pocket. Thr245, Ile247, and Thr250 together coordinate K(+). Thr251 lines the Mg(2+) pocket. Residue Lys454 coordinates (6S)-5-formyl-5,6,7,8-tetrahydrofolate.

It belongs to the TRAFAC class TrmE-Era-EngA-EngB-Septin-like GTPase superfamily. TrmE GTPase family. In terms of assembly, homodimer. Heterotetramer of two MnmE and two MnmG subunits. K(+) serves as cofactor.

The protein resides in the cytoplasm. Exhibits a very high intrinsic GTPase hydrolysis rate. Involved in the addition of a carboxymethylaminomethyl (cmnm) group at the wobble position (U34) of certain tRNAs, forming tRNA-cmnm(5)s(2)U34. The polypeptide is tRNA modification GTPase MnmE (Shigella dysenteriae serotype 1 (strain Sd197)).